A 179-amino-acid polypeptide reads, in one-letter code: Large ribosomal subunit protein uL6 (179 aa).

This sequence belongs to the universal ribosomal protein uL6 family. Part of the 50S ribosomal subunit.

Its function is as follows. This protein binds to the 23S rRNA, and is important in its secondary structure. It is located near the subunit interface in the base of the L7/L12 stalk, and near the tRNA binding site of the peptidyltransferase center. This chain is Large ribosomal subunit protein uL6, found in Bacillus velezensis (strain DSM 23117 / BGSC 10A6 / LMG 26770 / FZB42) (Bacillus amyloliquefaciens subsp. plantarum).